The sequence spans 408 residues: 26S proteasome regulatory subunit 6B homolog (408 aa).

Residue Ala2 is modified to N-acetylalanine. Ser16 carries the post-translational modification Phosphoserine. Residues 28 to 75 (EDLYGRLKSLERQLEFTDIQEEYVKDEQKNLKRELLRAQEEVKRIQSV) are a coiled coil. 196 to 203 (GPPGTGKT) serves as a coordination point for ATP.

The protein belongs to the AAA ATPase family. Component of the 19S regulatory particle (RP/PA700) base subcomplex of the 26S proteasome. The 26S proteasome is composed of a core protease (CP), known as the 20S proteasome, capped at one or both ends by the 19S regulatory particle (RP/PA700). The RP/PA700 complex is composed of at least 17 different subunits in two subcomplexes, the base and the lid, which form the portions proximal and distal to the 20S proteolytic core, respectively. As to expression, expressed in dark-grown etiolated seedlings, roots, leaves, stems and flowers.

Its subcellular location is the cytoplasm. The protein localises to the nucleus. The 26S proteasome is involved in the ATP-dependent degradation of ubiquitinated proteins. The regulatory (or ATPase) complex confers ATP dependency and substrate specificity to the 26S complex. The sequence is that of 26S proteasome regulatory subunit 6B homolog (RPT3) from Arabidopsis thaliana (Mouse-ear cress).